The sequence spans 316 residues: Phosphatidylinositol mannoside acyltransferase (316 aa).

The active-site Proton acceptor is His-137. Hexadecanoyl-CoA is bound by residues His-137 and Arg-175. The active site involves Glu-211. Glu-240 provides a ligand contact to hexadecanoyl-CoA.

It belongs to the LpxL/LpxM/LpxP family.

The protein resides in the cell inner membrane. The enzyme catalyses a 2,6-O-bis(alpha-D-mannopyranosyl)-1-phosphatidyl-1D-myo-inositol + an acyl-CoA = a 2-O-(alpha-D-mannosyl)-6-O-(6-O-acyl-alpha-D-mannosyl)-1-phosphatidyl-1D-myo-inositol + CoA. It carries out the reaction a 1,2-diacyl-sn-glycero-3-phospho-[alpha-D-mannopyranosyl-(1&lt;-&gt;6)-D-myo-inositol] + an acyl-CoA = a 1,2-diacyl-sn-glycero-3-phospho-[alpha-D-6-acyl-mannopyranosyl-(1&lt;-&gt;6)-D-myo-inositol] + CoA. It participates in phospholipid metabolism; phosphatidylinositol metabolism. Its function is as follows. Catalyzes the transfer of a palmitoyl moiety from palmitoyl-CoA to the 6-position of the mannose ring linked to the 2-position of myo-inositol in phosphatidyl-myo-inositol monomannoside (PIM1) or dimannoside (PIM2). Essential for growth and survival in axenic cultures and during macrophage infection and in a mouse model of infection. This chain is Phosphatidylinositol mannoside acyltransferase, found in Mycobacterium tuberculosis (strain ATCC 25618 / H37Rv).